A 317-amino-acid chain; its full sequence is Pseudouridine-5'-phosphate glycosidase 1 (317 aa).

Glutamate 40 acts as the Proton donor in catalysis. Lysine 101 and valine 121 together coordinate substrate. Aspartate 153 is a Mn(2+) binding site. 155 to 157 (SAD) is a substrate binding site. Lysine 174 functions as the Nucleophile in the catalytic mechanism.

This sequence belongs to the pseudouridine-5'-phosphate glycosidase family. In terms of assembly, homotrimer. It depends on Mn(2+) as a cofactor.

The catalysed reaction is D-ribose 5-phosphate + uracil = psi-UMP + H2O. In terms of biological role, catalyzes the reversible cleavage of pseudouridine 5'-phosphate (PsiMP) to ribose 5-phosphate and uracil. Functions biologically in the cleavage direction, as part of a pseudouridine degradation pathway. This Rhizobium johnstonii (strain DSM 114642 / LMG 32736 / 3841) (Rhizobium leguminosarum bv. viciae) protein is Pseudouridine-5'-phosphate glycosidase 1.